A 183-amino-acid polypeptide reads, in one-letter code: Ribulose bisphosphate carboxylase small subunit, chloroplastic 7 (183 aa).

Residues 1 to 43 constitute a chloroplast transit peptide; that stretch reads MAAAMMNKTVVVGKESVKGGVAPKVAMSRGGFLNSGIMKKDRD.

Belongs to the RuBisCO small chain family. Heterohexadecamer of 8 large and 8 small subunits.

It is found in the plastid. It localises to the chloroplast. RuBisCO catalyzes two reactions: the carboxylation of D-ribulose 1,5-bisphosphate, the primary event in carbon dioxide fixation, as well as the oxidative fragmentation of the pentose substrate. Both reactions occur simultaneously and in competition at the same active site. Although the small subunit is not catalytic it is essential for maximal activity. The protein is Ribulose bisphosphate carboxylase small subunit, chloroplastic 7 of Acetabularia peniculus (Green alga).